A 201-amino-acid polypeptide reads, in one-letter code: Small ribosomal subunit protein uS4c (201 aa).

The tract at residues 15-44 (LGALPGLTSKRPKTGNDLKNQSRSGKKSQY) is disordered. The 62-residue stretch at 89–150 (MRLDNILFRL…EKKSRTLIQN (62 aa)) folds into the S4 RNA-binding domain.

Belongs to the universal ribosomal protein uS4 family. As to quaternary structure, part of the 30S ribosomal subunit. Contacts protein S5. The interaction surface between S4 and S5 is involved in control of translational fidelity.

The protein resides in the plastid. The protein localises to the chloroplast. Functionally, one of the primary rRNA binding proteins, it binds directly to 16S rRNA where it nucleates assembly of the body of the 30S subunit. With S5 and S12 plays an important role in translational accuracy. The polypeptide is Small ribosomal subunit protein uS4c (rps4) (Cucumis sativus (Cucumber)).